Reading from the N-terminus, the 379-residue chain is Cobalt-precorrin-5B C(1)-methyltransferase (379 aa).

The protein belongs to the CbiD family.

The catalysed reaction is Co-precorrin-5B + S-adenosyl-L-methionine = Co-precorrin-6A + S-adenosyl-L-homocysteine. Its pathway is cofactor biosynthesis; adenosylcobalamin biosynthesis; cob(II)yrinate a,c-diamide from sirohydrochlorin (anaerobic route): step 6/10. Catalyzes the methylation of C-1 in cobalt-precorrin-5B to form cobalt-precorrin-6A. The sequence is that of Cobalt-precorrin-5B C(1)-methyltransferase from Klebsiella pneumoniae subsp. pneumoniae (strain ATCC 700721 / MGH 78578).